The sequence spans 198 residues: dTTP/UTP pyrophosphatase (198 aa).

Residue Asp-75 is the Proton acceptor of the active site.

It belongs to the Maf family. YhdE subfamily. It depends on a divalent metal cation as a cofactor.

The protein localises to the cytoplasm. The catalysed reaction is dTTP + H2O = dTMP + diphosphate + H(+). It carries out the reaction UTP + H2O = UMP + diphosphate + H(+). Its function is as follows. Nucleoside triphosphate pyrophosphatase that hydrolyzes dTTP and UTP. May have a dual role in cell division arrest and in preventing the incorporation of modified nucleotides into cellular nucleic acids. In Wolbachia sp. subsp. Drosophila simulans (strain wRi), this protein is dTTP/UTP pyrophosphatase.